Reading from the N-terminus, the 1192-residue chain is DNA topoisomerase 2 (1192 aa).

Residues asparagine 64, asparagine 95, and glycine 142–lysine 149 contribute to the ATP site. Positions 438, 539, and 541 each coordinate Mg(2+). One can recognise a Topo IIA-type catalytic domain in the interval isoleucine 707 to isoleucine 1174. The O-(5'-phospho-DNA)-tyrosine intermediate role is filled by tyrosine 800.

The protein belongs to the type II topoisomerase family. The cofactor is Mg(2+). Requires Mn(2+) as cofactor. Ca(2+) serves as cofactor.

It is found in the host cytoplasm. The catalysed reaction is ATP-dependent breakage, passage and rejoining of double-stranded DNA.. In terms of biological role, type II topoisomerase. Processively relaxes supercoiled DNA. Displays DNA-supercoiling activity only when associated with the viral histone-like protein. This is DNA topoisomerase 2 from Ornithodoros (relapsing fever ticks).